The primary structure comprises 168 residues: Phosphopantetheine adenylyltransferase (168 aa).

Residue Thr-13 coordinates substrate. ATP-binding positions include 13–14 (TF) and His-21. The substrate site is built by Lys-45, Leu-78, and Arg-92. ATP is bound by residues 93 to 95 (GLR), Glu-103, and 128 to 134 (TQFISSG).

This sequence belongs to the bacterial CoaD family. Homohexamer. Mg(2+) serves as cofactor.

The protein localises to the cytoplasm. The enzyme catalyses (R)-4'-phosphopantetheine + ATP + H(+) = 3'-dephospho-CoA + diphosphate. It participates in cofactor biosynthesis; coenzyme A biosynthesis; CoA from (R)-pantothenate: step 4/5. Reversibly transfers an adenylyl group from ATP to 4'-phosphopantetheine, yielding dephospho-CoA (dPCoA) and pyrophosphate. This is Phosphopantetheine adenylyltransferase from Wolbachia sp. subsp. Drosophila simulans (strain wRi).